Consider the following 595-residue polypeptide: Elongation factor 4 (595 aa).

The region spanning 2–183 (KNIRNFCIIA…AIIERISPPT (182 aa)) is the tr-type G domain. GTP-binding positions include 14–19 (DHGKST) and 130–133 (NKID).

This sequence belongs to the TRAFAC class translation factor GTPase superfamily. Classic translation factor GTPase family. LepA subfamily.

The protein resides in the cell inner membrane. The catalysed reaction is GTP + H2O = GDP + phosphate + H(+). In terms of biological role, required for accurate and efficient protein synthesis under certain stress conditions. May act as a fidelity factor of the translation reaction, by catalyzing a one-codon backward translocation of tRNAs on improperly translocated ribosomes. Back-translocation proceeds from a post-translocation (POST) complex to a pre-translocation (PRE) complex, thus giving elongation factor G a second chance to translocate the tRNAs correctly. Binds to ribosomes in a GTP-dependent manner. This is Elongation factor 4 from Amoebophilus asiaticus (strain 5a2).